The primary structure comprises 416 residues: uncharacterized protein (416 aa).

This is an uncharacterized protein from Methanocaldococcus jannaschii (strain ATCC 43067 / DSM 2661 / JAL-1 / JCM 10045 / NBRC 100440) (Methanococcus jannaschii).